We begin with the raw amino-acid sequence, 161 residues long: Protein ZMO0507 (161 aa).

Belongs to the free Met sulfoxide reductase family.

In Zymomonas mobilis subsp. mobilis (strain ATCC 31821 / ZM4 / CP4), this protein is Protein ZMO0507.